The sequence spans 428 residues: Ribulose bisphosphate carboxylase (428 aa).

The Proton acceptor role is filled by Lys-151. Lys-153 is a substrate binding site. Residues Lys-177, Asp-179, and Glu-180 each contribute to the Mg(2+) site. Lys-177 carries the post-translational modification N6-carboxylysine. Catalysis depends on His-270, which acts as the Proton acceptor. Substrate is bound by residues Arg-271, His-303, 354-356 (SGG), and 376-379 (QFGG).

Belongs to the RuBisCO large chain family. Type III subfamily. As to quaternary structure, homodimer or homodecamer. In contrast to form I RuBisCO, the form III RuBisCO is composed solely of large subunits. Requires Mg(2+) as cofactor.

It catalyses the reaction 2 (2R)-3-phosphoglycerate + 2 H(+) = D-ribulose 1,5-bisphosphate + CO2 + H2O. The catalysed reaction is D-ribulose 1,5-bisphosphate + O2 = 2-phosphoglycolate + (2R)-3-phosphoglycerate + 2 H(+). Functionally, catalyzes the addition of molecular CO(2) and H(2)O to ribulose 1,5-bisphosphate (RuBP), generating two molecules of 3-phosphoglycerate (3-PGA). Functions in an archaeal AMP degradation pathway, together with AMP phosphorylase and R15P isomerase. This Methanosarcina mazei (strain ATCC BAA-159 / DSM 3647 / Goe1 / Go1 / JCM 11833 / OCM 88) (Methanosarcina frisia) protein is Ribulose bisphosphate carboxylase.